The following is a 358-amino-acid chain: Mesaconyl-CoA hydratase (358 aa).

The protein belongs to the enoyl-CoA hydratase/isomerase family. Homodimer.

The catalysed reaction is (2R,3S)-beta-methylmalyl-CoA = 2-methylfumaryl-CoA + H2O. Its activity is regulated as follows. Shows highest activity at 0.5 M KCl. Does not require divalent ions for activity. Involved in the methylaspartate cycle. Catalyzes the reversible hydration of mesaconyl-CoA (2-methylfumaryl-CoA) to yield beta-methylmalyl-CoA ((2R,3S)-beta-methylmalyl-CoA). Also shows activity with mesaconyl-C4-CoA (3-methylfumaryl-CoA), (S)-citramalyl-CoA and (S)-malyl-CoA. The sequence is that of Mesaconyl-CoA hydratase from Haloarcula hispanica (strain ATCC 33960 / DSM 4426 / JCM 8911 / NBRC 102182 / NCIMB 2187 / VKM B-1755).